The chain runs to 109 residues: Cell division protein ZapA (109 aa).

The stretch at 21-97 forms a coiled coil; sequence PDQRDALNQA…QTIEQALLDQ (77 aa).

The protein belongs to the ZapA family. Type 1 subfamily. Homodimer. Interacts with FtsZ.

It localises to the cytoplasm. Activator of cell division through the inhibition of FtsZ GTPase activity, therefore promoting FtsZ assembly into bundles of protofilaments necessary for the formation of the division Z ring. It is recruited early at mid-cell but it is not essential for cell division. The protein is Cell division protein ZapA of Salmonella agona (strain SL483).